A 96-amino-acid polypeptide reads, in one-letter code: Putative pterin-4-alpha-carbinolamine dehydratase (96 aa).

This sequence belongs to the pterin-4-alpha-carbinolamine dehydratase family.

The enzyme catalyses (4aS,6R)-4a-hydroxy-L-erythro-5,6,7,8-tetrahydrobiopterin = (6R)-L-erythro-6,7-dihydrobiopterin + H2O. In Paraburkholderia xenovorans (strain LB400), this protein is Putative pterin-4-alpha-carbinolamine dehydratase.